The primary structure comprises 394 residues: MAKEKFERSKPHVNVGTIGHVDHGKTTLTAAITKVMAEKNGGMARKFDEIDSAPEEKARGITINTSHVEYESPNRHYAHVDCPGHADYVKNMITGAAQMDGAILVCSAADGPMPQTREHILLSRQVGVPKIVVFLNKCDMVDDEELLELVEMEVRELLDQYEFPGDDTPVIMGSALRAIEGDEAYVEKIVELVQAMDDYIPAPERDTEKPFILPIEDVFSISGRGTVVTGRIERGVVNVGDEVEVVGIRPTQKTTVTGVEMFRKLLDRGEAGDNVGILVRGLKRDDVERGQVLCKPGSIKPHTKFEAEVYVLSKEEGGRHTPFFKGYRPQFYFRTTDITGAVELPEGVEMVMPGDNVKMTITLINPIAMDEGLRFAIREGGRTVGAGVVAKIIE.

The 195-residue stretch at 10-204 folds into the tr-type G domain; sequence KPHVNVGTIG…AMDDYIPAPE (195 aa). The tract at residues 19-26 is G1; sequence GHVDHGKT. 19-26 is a GTP binding site; it reads GHVDHGKT. Threonine 26 is a binding site for Mg(2+). The segment at 60-64 is G2; the sequence is GITIN. The G3 stretch occupies residues 81 to 84; that stretch reads DCPG. Residues 81-85 and 136-139 each bind GTP; these read DCPGH and NKCD. The interval 136-139 is G4; sequence NKCD. Residues 174 to 176 are G5; the sequence is SAL.

This sequence belongs to the TRAFAC class translation factor GTPase superfamily. Classic translation factor GTPase family. EF-Tu/EF-1A subfamily. As to quaternary structure, monomer.

It is found in the cytoplasm. It carries out the reaction GTP + H2O = GDP + phosphate + H(+). Functionally, GTP hydrolase that promotes the GTP-dependent binding of aminoacyl-tRNA to the A-site of ribosomes during protein biosynthesis. The chain is Elongation factor Tu from Francisella tularensis subsp. holarctica (strain FTNF002-00 / FTA).